A 236-amino-acid chain; its full sequence is Ribosome assembly factor mrt4 (236 aa).

This sequence belongs to the universal ribosomal protein uL10 family. Associates with the pre-60S ribosomal particle.

It is found in the nucleus. The protein resides in the nucleolus. It localises to the cytoplasm. Component of the ribosome assembly machinery. Nuclear paralog of the ribosomal protein P0, it binds pre-60S subunits at an early stage of assembly in the nucleolus, and is replaced by P0 in cytoplasmic pre-60S subunits and mature 80S ribosomes. This chain is Ribosome assembly factor mrt4, found in Eremothecium gossypii (strain ATCC 10895 / CBS 109.51 / FGSC 9923 / NRRL Y-1056) (Yeast).